A 359-amino-acid polypeptide reads, in one-letter code: N-acetyl-gamma-glutamyl-phosphate reductase (359 aa).

Cys-162 is a catalytic residue.

The protein belongs to the NAGSA dehydrogenase family. Type 1 subfamily.

Its subcellular location is the cytoplasm. It carries out the reaction N-acetyl-L-glutamate 5-semialdehyde + phosphate + NADP(+) = N-acetyl-L-glutamyl 5-phosphate + NADPH + H(+). It participates in amino-acid biosynthesis; L-arginine biosynthesis; N(2)-acetyl-L-ornithine from L-glutamate: step 3/4. Functionally, catalyzes the NADPH-dependent reduction of N-acetyl-5-glutamyl phosphate to yield N-acetyl-L-glutamate 5-semialdehyde. The polypeptide is N-acetyl-gamma-glutamyl-phosphate reductase (Prochlorococcus marinus (strain SARG / CCMP1375 / SS120)).